Here is a 343-residue protein sequence, read N- to C-terminus: Branched-chain-amino-acid aminotransferase (343 aa).

Lysine 182 is modified (N6-(pyridoxal phosphate)lysine).

The protein belongs to the class-IV pyridoxal-phosphate-dependent aminotransferase family. The cofactor is pyridoxal 5'-phosphate.

It catalyses the reaction L-leucine + 2-oxoglutarate = 4-methyl-2-oxopentanoate + L-glutamate. The catalysed reaction is L-isoleucine + 2-oxoglutarate = (S)-3-methyl-2-oxopentanoate + L-glutamate. The enzyme catalyses L-valine + 2-oxoglutarate = 3-methyl-2-oxobutanoate + L-glutamate. Its pathway is amino-acid biosynthesis; L-isoleucine biosynthesis; L-isoleucine from 2-oxobutanoate: step 4/4. It participates in amino-acid biosynthesis; L-leucine biosynthesis; L-leucine from 3-methyl-2-oxobutanoate: step 4/4. The protein operates within amino-acid biosynthesis; L-valine biosynthesis; L-valine from pyruvate: step 4/4. Acts on leucine, isoleucine and valine. This Haemophilus influenzae (strain ATCC 51907 / DSM 11121 / KW20 / Rd) protein is Branched-chain-amino-acid aminotransferase (ilvE).